The primary structure comprises 305 residues: tRNA uridine(34) hydroxylase (305 aa).

The Rhodanese domain maps to cysteine 126–serine 220. Residue cysteine 180 is the Cysteine persulfide intermediate of the active site.

This sequence belongs to the TrhO family.

The enzyme catalyses uridine(34) in tRNA + AH2 + O2 = 5-hydroxyuridine(34) in tRNA + A + H2O. Catalyzes oxygen-dependent 5-hydroxyuridine (ho5U) modification at position 34 in tRNAs. This chain is tRNA uridine(34) hydroxylase, found in Nostoc punctiforme (strain ATCC 29133 / PCC 73102).